A 51-amino-acid chain; its full sequence is Large ribosomal subunit protein bL33 (51 aa).

The protein belongs to the bacterial ribosomal protein bL33 family.

The polypeptide is Large ribosomal subunit protein bL33 (Ruthia magnifica subsp. Calyptogena magnifica).